Here is a 220-residue protein sequence, read N- to C-terminus: Histone deacetylase complex subunit SAP30 (220 aa).

The interval 1–129 is interaction with NCOR1; that stretch reads MNGFTPDEMS…QSVRNRRKRK (129 aa). Residue Thr5 is modified to Phosphothreonine. The Atypical zinc-finger motif lies at 67-115; it reads CCLREDGERCGRAAGNASFSKRIQKSISQKKVKIELDKSARHLYICDYH. Residue Lys87 forms a Glycyl lysine isopeptide (Lys-Gly) (interchain with G-Cter in SUMO2) linkage. Residues 123–143 form a disordered region; that stretch reads RNRRKRKGSDDDGGDSPVQDI. Residues 130–220 form an interaction with SIN3A region; the sequence is GSDDDGGDSP…SDLKVDSGVH (91 aa). A phosphoserine mark is found at Ser131 and Ser138. Thr145 is subject to Phosphothreonine. Residues Lys194, Lys205, and Lys214 each participate in a glycyl lysine isopeptide (Lys-Gly) (interchain with G-Cter in SUMO2) cross-link.

It belongs to the SAP30 family. Component of the histone deacetylase complex that includes at least SIN3A, HDAC1 and HDAC2. Found in a complex composed of at least SINHCAF, SIN3A, HDAC1, SAP30, RBBP4, OGT and TET1. Interacts with HDAC1. Interacts with SIN3A, SIN3B, HDAC2, RBBP4 and NCOR1. Interacts with SAMSN1. Interacts with HCFC1. Interacts with SAP30BP. As to expression, expressed in all tissues tested with highest levels in pancreas, ovary, PBL, spleen and thymus; lowest levels in brain, placenta, lung and kidney.

It localises to the nucleus. Involved in the functional recruitment of the Sin3-histone deacetylase complex (HDAC) to a specific subset of N-CoR corepressor complexes. Capable of transcription repression by N-CoR. Active in deacetylating core histone octamers (when in a complex) but inactive in deacetylating nucleosomal histones. Functionally, (Microbial infection) Involved in transcriptional repression of HHV-1 genes TK and gC. The protein is Histone deacetylase complex subunit SAP30 of Homo sapiens (Human).